The primary structure comprises 378 residues: Erythronate-4-phosphate dehydrogenase (378 aa).

Substrate is bound by residues serine 45 and threonine 66. Aspartate 146 and threonine 175 together coordinate NAD(+). The active site involves arginine 208. Aspartate 232 lines the NAD(+) pocket. The active site involves glutamate 237. Histidine 254 (proton donor) is an active-site residue. Glycine 257 provides a ligand contact to NAD(+). Tyrosine 258 contacts substrate.

Belongs to the D-isomer specific 2-hydroxyacid dehydrogenase family. PdxB subfamily. In terms of assembly, homodimer.

The protein localises to the cytoplasm. The enzyme catalyses 4-phospho-D-erythronate + NAD(+) = (R)-3-hydroxy-2-oxo-4-phosphooxybutanoate + NADH + H(+). The protein operates within cofactor biosynthesis; pyridoxine 5'-phosphate biosynthesis; pyridoxine 5'-phosphate from D-erythrose 4-phosphate: step 2/5. Catalyzes the oxidation of erythronate-4-phosphate to 3-hydroxy-2-oxo-4-phosphonooxybutanoate. This chain is Erythronate-4-phosphate dehydrogenase, found in Escherichia coli O8 (strain IAI1).